The following is a 411-amino-acid chain: MNLAVIGINYNNTPIDIREKVSFSKSQKYKACTYLIKKGISEIIIVSTCNRSEIYICSDEIDSHINEVVNFYKIFFNVESVNEYIFIKKDKEAVSHIYNVSAGLDSMILGEDQILGQVKEALRYSMENKFSRKVLNKLFREAITSAKKIKSELKISETPISMVYIAIKLLEKNIGTLKGKKACIIGAGDMGRLALKHLINEELEEIFVANRTYNNVIDLLKEFPKIKLIDYEKKYEILDNVDILITATAAPHLIIKKEQLQNIKQELYIMDLALPRDVEKSAGDIENIHLYDVDDFKNISDSNKIKREELSLIAKDSIDSYVNEFNQWMKSLKVDNTIKDLNNRCRDIKDEYLGYITKKIDLNERDKEILEKMLFGALKKVVKEPILNLKELKDEDEINKYIKSVNELFKF.

Substrate contacts are provided by residues 48–51 (TCNR), S106, 111–113 (EDQ), and Q117. Catalysis depends on C49, which acts as the Nucleophile. 186–191 (GAGDMG) contacts NADP(+).

The protein belongs to the glutamyl-tRNA reductase family. Homodimer.

The catalysed reaction is (S)-4-amino-5-oxopentanoate + tRNA(Glu) + NADP(+) = L-glutamyl-tRNA(Glu) + NADPH + H(+). It participates in porphyrin-containing compound metabolism; protoporphyrin-IX biosynthesis; 5-aminolevulinate from L-glutamyl-tRNA(Glu): step 1/2. In terms of biological role, catalyzes the NADPH-dependent reduction of glutamyl-tRNA(Glu) to glutamate 1-semialdehyde (GSA). This chain is Glutamyl-tRNA reductase, found in Clostridium novyi (strain NT).